A 508-amino-acid polypeptide reads, in one-letter code: NAD(P)H-quinone oxidoreductase subunit 2 B, chloroplastic (508 aa).

13 consecutive transmembrane segments (helical) span residues 24 to 44 (LLLF…GLIL), 59 to 79 (WLYF…LFRW), 99 to 119 (IFQF…VEYI), 124 to 144 (MAIT…MFLC), 149 to 169 (FITI…LSGY), 184 to 204 (LLMG…LYGL), 227 to 247 (PGIS…LSPA), 295 to 315 (WHLL…LIAI), 323 to 343 (MLAY…IVGD), 354 to 374 (YMLF…LFGL), 395 to 415 (ALSL…AGFF), 418 to 438 (LYLF…IGLL), and 482 to 502 (MIVC…IIAI).

It belongs to the complex I subunit 2 family. In terms of assembly, NDH is composed of at least 16 different subunits, 5 of which are encoded in the nucleus.

It localises to the plastid. The protein resides in the chloroplast thylakoid membrane. The enzyme catalyses a plastoquinone + NADH + (n+1) H(+)(in) = a plastoquinol + NAD(+) + n H(+)(out). The catalysed reaction is a plastoquinone + NADPH + (n+1) H(+)(in) = a plastoquinol + NADP(+) + n H(+)(out). NDH shuttles electrons from NAD(P)H:plastoquinone, via FMN and iron-sulfur (Fe-S) centers, to quinones in the photosynthetic chain and possibly in a chloroplast respiratory chain. The immediate electron acceptor for the enzyme in this species is believed to be plastoquinone. Couples the redox reaction to proton translocation, and thus conserves the redox energy in a proton gradient. This chain is NAD(P)H-quinone oxidoreductase subunit 2 B, chloroplastic, found in Ipomoea purpurea (Common morning glory).